The sequence spans 224 residues: uncharacterized protein (224 aa).

The N-terminal stretch at 1 to 19 is a signal peptide; the sequence is MLRHITFTVFITTSMNTLA.

It belongs to the periplasmic pilus chaperone family.

Its subcellular location is the periplasm. Could be required for the biogenesis of a putative fimbria. This is an uncharacterized protein from Escherichia coli (strain K12).